Reading from the N-terminus, the 190-residue chain is dCTP deaminase (190 aa).

107 to 112 (KSTYAR) contacts dCTP. Glu133 functions as the Proton donor/acceptor in the catalytic mechanism. Gln152, Tyr166, and Gln176 together coordinate dCTP.

The protein belongs to the dCTP deaminase family. As to quaternary structure, homotrimer.

It catalyses the reaction dCTP + H2O + H(+) = dUTP + NH4(+). It functions in the pathway pyrimidine metabolism; dUMP biosynthesis; dUMP from dCTP (dUTP route): step 1/2. Functionally, catalyzes the deamination of dCTP to dUTP. This is dCTP deaminase from Campylobacter hominis (strain ATCC BAA-381 / DSM 21671 / CCUG 45161 / LMG 19568 / NCTC 13146 / CH001A).